Consider the following 464-residue polypeptide: MGKRLLDKLWERHVVATNENGLDLLYIDLHLVHEVTSPQAFEGLRLTNRTVRRPDLTFATMDHNIPTKDVWNITDRIAKQQLDTLRQNCKQFQVPLADIGDEEQGIVHVIGPELGLTQPGKTIVCGDSHTATHGAFGALAFGIGTSEVEHVLATQTLWQRKPKAMGIELKGKLPQGVYAKDIILHLLSKYGVAVGTGYVMEFYGEAIHAMDMEERMTLCNMAIEGGAKAGIIAPDEKTFAYVKGRKYAPKDYESIKKKWSELYTDLDAVYDLHILVDVTDLAPYVTWGTNPSMGVRIDEKLPEKHDANDERAFSYMGLSPGQSTYDIPVQHVFIGSCTNSRLSDLEIAASVVKGKKVKEGVRALVVPGSQRVREAAMHKGLHRIFEEAGFEWREPGCSMCLGMNPDQVPEGEHCASTSNRNFEGRQGKGARTHLVSPAMAAAAALYGHFVDIRKESYDGAISYS.

[4Fe-4S] cluster contacts are provided by C337, C397, and C400.

Belongs to the aconitase/IPM isomerase family. LeuC type 1 subfamily. As to quaternary structure, heterodimer of LeuC and LeuD. Requires [4Fe-4S] cluster as cofactor.

The catalysed reaction is (2R,3S)-3-isopropylmalate = (2S)-2-isopropylmalate. It participates in amino-acid biosynthesis; L-leucine biosynthesis; L-leucine from 3-methyl-2-oxobutanoate: step 2/4. Its function is as follows. Catalyzes the isomerization between 2-isopropylmalate and 3-isopropylmalate, via the formation of 2-isopropylmaleate. The sequence is that of 3-isopropylmalate dehydratase large subunit from Bacillus cereus (strain ATCC 14579 / DSM 31 / CCUG 7414 / JCM 2152 / NBRC 15305 / NCIMB 9373 / NCTC 2599 / NRRL B-3711).